The chain runs to 1055 residues: MSIYHGIIGSSDHIQNIFPPPSPRKNISLSTNNISSLTTPKNFTAIVVTKPLSQSTTSTQEMMNTSDILFDIQQPLSPQHHSRQIQQQQHEKITPEEEERRSDELQKILLDTIPILIKGVETLGIEVEQICNGDSANEKRSNCQVLVDIQKTLREYPRGMGYRSKTIPSNIVGKPKLIAFRHSMDQLVWENISKLSILKDFVEFTLDFQKLCVIGISIRDAINSFVNNKCEYLIKGFEFNNTNSILSGINIHHHLNHQPGASTPRPSHSSSSSLSHSLSSSPMSQSLPSSLTSGGVSLLNTSDDAIVPSLSSGNDDSSGSSLSSSDANVISINISTVIQNGVRDEINNTSISALKKSQKQQPVVLSRAPKQVMESTRILVDTVVNRKCMYREEKASIYREMMNDRLTLLKEDPKKFKQQLLQQRRQKLTNSDQPHETDYNEDFNLNNNSTNNNNNIKKESNGSSVNSQTTTTTTTTNNNNNNISPQHSGTSGSPSDKENSPIFSPGYLSTSPPKSPPKSPEFLGVPIGKKAHLLGHARSFSADTHATKEAAANQHHHSHNNIGSVLSPPLSSQNERILRNYKLLSSSPSSSSSAVVTNPVSLTTQLQQQQQQQQQQQTTSQPTQPPPSEYQLLDLEWEEPIDSDFILPCKGYKIDSGNSKCQQVNYDELIVLYTDEDEYHYCDDFCSLEHFNFLGVNKNQPDNPMCISVVVQHDTNELLYIIRTGEKDEKYRLSLPYGKKEISSKDMLKMIKKSRFNQMSNFKLKEVKSDQNQQFIKQLIQFEAKNIHKTFKFGVLYCSENQGTDENELYSNSSTSDEFQEFLRILGDRVQLQGWTKYRGGLDIKDNTTGTHSIYKKWRDFEIMYHVAPMIPCRAADEQSVERKRHLGNDIVLIIYKEGNTKLFDPSIIKSNFNHIFAVVQKVDPIPNVDGAAVINLGNSFNNNNSSNNNNNNNNNNNNNNNSDSNLPTTNNLPIITNVNYKISIGCKEEVQNFGPAFPKNHIFSTSTGENLTDFLLTRLINGERATLKSPVFAQKLKRTRKEFLHSFITDFGSE.

Disordered regions lie at residues 76-100 (LSPQHHSRQIQQQQHEKITPEEEER), 256-292 (NHQPGASTPRPSHSSSSSLSHSLSSSPMSQSLPSSLT), 418-525 (QQLL…FLGV), 544-570 (THATKEAAANQHHHSHNNIGSVLSPPL), 603-629 (TTQLQQQQQQQQQQQTTSQPTQPPPSE), and 943-969 (NNNSSNNNNNNNNNNNNNNNSDSNLPT). Residues 89–100 (QHEKITPEEEER) show a composition bias toward basic and acidic residues. Composition is skewed to low complexity over residues 262–292 (STPRPSHSSSSSLSHSLSSSPMSQSLPSSLT), 442–455 (DFNLNNNSTNNNNN), and 469–482 (TTTTTTTTNNNNNN). Positions 483 to 494 (ISPQHSGTSGSP) are enriched in polar residues. Composition is skewed to low complexity over residues 603 to 622 (TTQLQQQQQQQQQQQTTSQP) and 943 to 966 (NNNSSNNNNNNNNNNNNNNNSDSN). Residues 779-1048 (LIQFEAKNIH…RTRKEFLHSF (270 aa)) form the Rap-GAP domain.

It localises to the cytoplasm. Its subcellular location is the cell cortex. In terms of biological role, mediates the deactivation of rap1 and plays an important role in spatially and temporally regulating cell adhesion and chemotaxis by controlling attachment disassembly in the leading edge through the regulation of myosin II assembly and disassembly. Overexpression leads to defective chemotaxis. In Dictyostelium discoideum (Social amoeba), this protein is RapA guanosine triphosphatase-activating protein 1 (rapgap1).